A 488-amino-acid chain; its full sequence is Putative BTB/POZ domain-containing protein L674 (488 aa).

The BTB domain occupies asparagine 83 to asparagine 150.

The protein belongs to the mimivirus BTB/WD family.

The polypeptide is Putative BTB/POZ domain-containing protein L674 (Acanthamoeba polyphaga (Amoeba)).